Reading from the N-terminus, the 482-residue chain is Glutamyl-tRNA(Gln) amidotransferase subunit A (482 aa).

Active-site charge relay system residues include K75 and S150. The active-site Acyl-ester intermediate is S174.

Belongs to the amidase family. GatA subfamily. In terms of assembly, heterotrimer of A, B and C subunits.

It carries out the reaction L-glutamyl-tRNA(Gln) + L-glutamine + ATP + H2O = L-glutaminyl-tRNA(Gln) + L-glutamate + ADP + phosphate + H(+). Functionally, allows the formation of correctly charged Gln-tRNA(Gln) through the transamidation of misacylated Glu-tRNA(Gln) in organisms which lack glutaminyl-tRNA synthetase. The reaction takes place in the presence of glutamine and ATP through an activated gamma-phospho-Glu-tRNA(Gln). In Acaryochloris marina (strain MBIC 11017), this protein is Glutamyl-tRNA(Gln) amidotransferase subunit A.